A 309-amino-acid polypeptide reads, in one-letter code: Transcription elongation factor S-II (309 aa).

A TFIIS N-terminal domain is found at 5–79 (EVLVHVKNLE…SSWKDAINKN (75 aa)). Residues 78-142 (KNKRSRQAQQ…NSKNDGVDTA (65 aa)) are disordered. The span at 88–102 (HHQDHAPGNAEDKTT) shows a compositional bias: basic and acidic residues. Positions 103-120 (VGESVNGVQQPASSQSDA) are enriched in polar residues. Serine 116 bears the Phosphoserine mark. One can recognise a TFIIS central domain in the interval 148-264 (LRDQVLKALY…NAQGATIERS (117 aa)). The TFIIS-type zinc-finger motif lies at 267–307 (DRFTCGKCKEKKVSYYQLQTRSADEPLTTFCTCEACGNRWK). Positions 271, 274, 299, and 302 each coordinate Zn(2+).

This sequence belongs to the TFS-II family.

Its subcellular location is the nucleus. Its function is as follows. Necessary for efficient RNA polymerase II transcription elongation past template-encoded arresting sites. The arresting sites in DNA have the property of trapping a certain fraction of elongating RNA polymerases that pass through, resulting in locked ternary complexes. Cleavage of the nascent transcript by S-II allows the resumption of elongation from the new 3'-terminus. Can promote the transfer of one strand of a double-stranded DNA molecule to a homologous single strand and thus may be involved in recombination. The polypeptide is Transcription elongation factor S-II (DST1) (Saccharomyces cerevisiae (strain ATCC 204508 / S288c) (Baker's yeast)).